A 616-amino-acid polypeptide reads, in one-letter code: UvrABC system protein C (616 aa).

Residues 21-100 (TCPGVYQFKN…IKDLKPRYNI (80 aa)) form the GIY-YIG domain. In terms of domain architecture, UVR spans 214-249 (GALIRTLSAEMHRYADELRFEEAAELKIQIEGLRKY).

The protein belongs to the UvrC family. Interacts with UvrB in an incision complex.

It is found in the cytoplasm. Functionally, the UvrABC repair system catalyzes the recognition and processing of DNA lesions. UvrC both incises the 5' and 3' sides of the lesion. The N-terminal half is responsible for the 3' incision and the C-terminal half is responsible for the 5' incision. In Prosthecochloris aestuarii (strain DSM 271 / SK 413), this protein is UvrABC system protein C.